The following is a 268-amino-acid chain: GTP cyclohydrolase FolE2 (268 aa).

Belongs to the GTP cyclohydrolase IV family.

It catalyses the reaction GTP + H2O = 7,8-dihydroneopterin 3'-triphosphate + formate + H(+). The protein operates within cofactor biosynthesis; 7,8-dihydroneopterin triphosphate biosynthesis; 7,8-dihydroneopterin triphosphate from GTP: step 1/1. Converts GTP to 7,8-dihydroneopterin triphosphate. This Janthinobacterium sp. (strain Marseille) (Minibacterium massiliensis) protein is GTP cyclohydrolase FolE2.